A 37-amino-acid chain; its full sequence is Large ribosomal subunit protein bL36 (37 aa).

It belongs to the bacterial ribosomal protein bL36 family.

The chain is Large ribosomal subunit protein bL36 from Thermomicrobium roseum (strain ATCC 27502 / DSM 5159 / P-2).